Consider the following 47-residue polypeptide: Exoenzymes regulatory protein AepH (47 aa).

2 stretches are compositionally biased toward basic and acidic residues: residues 1–17 and 33–47; these read MGQE…QDGH and TKKE…DANV. Residues 1 to 47 form a disordered region; the sequence is MGQEPKGIESRKIQDGHVRKKVGRQQGLWVRTTKKEKFSRMSRDANV.

Involved in the control of extracellular enzymes production. Stimulates PEL, PEH, CEL, and PRT production. The polypeptide is Exoenzymes regulatory protein AepH (aepH) (Pectobacterium carotovorum subsp. carotovorum (Erwinia carotovora subsp. carotovora)).